A 144-amino-acid polypeptide reads, in one-letter code: D-aminoacyl-tRNA deacylase (144 aa).

The short motif at 136–137 (GP) is the Gly-cisPro motif, important for rejection of L-amino acids element.

Belongs to the DTD family. Homodimer.

It is found in the cytoplasm. It catalyses the reaction glycyl-tRNA(Ala) + H2O = tRNA(Ala) + glycine + H(+). The catalysed reaction is a D-aminoacyl-tRNA + H2O = a tRNA + a D-alpha-amino acid + H(+). Its function is as follows. An aminoacyl-tRNA editing enzyme that deacylates mischarged D-aminoacyl-tRNAs. Also deacylates mischarged glycyl-tRNA(Ala), protecting cells against glycine mischarging by AlaRS. Acts via tRNA-based rather than protein-based catalysis; rejects L-amino acids rather than detecting D-amino acids in the active site. By recycling D-aminoacyl-tRNA to D-amino acids and free tRNA molecules, this enzyme counteracts the toxicity associated with the formation of D-aminoacyl-tRNA entities in vivo and helps enforce protein L-homochirality. The polypeptide is D-aminoacyl-tRNA deacylase (Corynebacterium efficiens (strain DSM 44549 / YS-314 / AJ 12310 / JCM 11189 / NBRC 100395)).